The chain runs to 293 residues: Ribosomal protein L11 methyltransferase (293 aa).

4 residues coordinate S-adenosyl-L-methionine: T145, G166, D188, and N230.

The protein belongs to the methyltransferase superfamily. PrmA family.

The protein resides in the cytoplasm. It carries out the reaction L-lysyl-[protein] + 3 S-adenosyl-L-methionine = N(6),N(6),N(6)-trimethyl-L-lysyl-[protein] + 3 S-adenosyl-L-homocysteine + 3 H(+). Its function is as follows. Methylates ribosomal protein L11. The polypeptide is Ribosomal protein L11 methyltransferase (Shewanella baltica (strain OS185)).